The primary structure comprises 939 residues: MEQLAKSYEPGDLERRWYQHWEQAGYFKPSMDTSKPSFAIQLPPPNVTGTLHMGHAFNQTIMDGLTRFYRMKGHNTLWVPGTDHAGIATQIVVERQLADQGLNRHDMGREAFTSKIWEWKEKSGGTITSQMRRVGCSVDWDREYFTMDDVRAEVVTEVFVRLYEQGLIYRGKRLSNWDAKLGTAISDLEVVSEEEDGHMWHIKYPVVGSDEFVTVATTRPETLLGDVAVAIAPDDERYLHLVGKQLELPLTGRTIPVIADSYVDKEFGTGFVKITPAHDFNDYEVGKRHGTQLINVMSLEAKILAKAQIFGFDGSAQGAIELPAAYAGLTAQEARKAMLADLQAQGLLLETKPHKLMVPRGDRTGTVIEPLLTDQWFVAMNKVAEGDATGQSIAAKAIEAVESGEVRFVPENWVNTYNQWMKNIQDWCISRQLWWGHQIPAWYDEDGNIYVGRTEAEAQAKAGGKTLRREQDVLDTWFSSALVPFSTLGWPEETPDLKAFLTSNVLVTGYEIIFFWVARMIMMTKHFTGKVPFKDVYIHGMVRDHEGKKMSKSEGNVIDPVDLIDGIALEPLVEKRTTGLRRPEKAPQIAKATEKLFPEGIPAYGTDALRFTMASYATLGRSVNFDFKRAEGYRNFCNKLWNATRFVMMNVDGKDCGQDESLPLEYSFVDQWIIGRLQQAEIDVTNALETYRFDIAAQVIYEFIWNEYCDWYVELAKVQIQGGNEAQQRATRRTLVRVLEVALRLNHPLMPFITEELWQTVAPLANAKKTESLMLAPWPVADESKISAAANARMEAFKDMVNAVRNLRGEMGIGPAVKAPLFIETADASIADFVPYLKLLARLTEGTLVAKLPEDDAPVAMSGEARLMLKVEVDKAAETARLRKEQGKVEAELAKLTAKLEKPGYVDKAPAHLVERDKAQLAELNDKLEKIRVQLVKLA.

The 'HIGH' region motif lies at 45–55 (PNVTGTLHMGH). The short motif at 549 to 553 (KMSKS) is the 'KMSKS' region element. Lys-552 serves as a coordination point for ATP. Positions 876–939 (AAETARLRKE…KIRVQLVKLA (64 aa)) form a coiled coil.

Belongs to the class-I aminoacyl-tRNA synthetase family. ValS type 1 subfamily. In terms of assembly, monomer.

The protein resides in the cytoplasm. The enzyme catalyses tRNA(Val) + L-valine + ATP = L-valyl-tRNA(Val) + AMP + diphosphate. In terms of biological role, catalyzes the attachment of valine to tRNA(Val). As ValRS can inadvertently accommodate and process structurally similar amino acids such as threonine, to avoid such errors, it has a 'posttransfer' editing activity that hydrolyzes mischarged Thr-tRNA(Val) in a tRNA-dependent manner. The sequence is that of Valine--tRNA ligase from Chromobacterium violaceum (strain ATCC 12472 / DSM 30191 / JCM 1249 / CCUG 213 / NBRC 12614 / NCIMB 9131 / NCTC 9757 / MK).